We begin with the raw amino-acid sequence, 904 residues long: MPVRKQDTQRALHLLEEYRSKLSQTEDRQLRSSIERVINIFQSNLFQALIDIQEFYEVTLLDNPKCIDRSKPSEPIQPVNTWEISSLPSSTVTSETLPSSLSPSVEKYRYQDEDTPPQEHISPQITNEVIGPELVHVSEKNLSEIENVHGFVSHSHISPIKPTEAVLPSPPTVPVIPVLPVPAENTVILPTIPQANPPPVLVNTDSLETPTYVNGTDADYEYEEITLERGNSGLGFSIAGGTDNPHIGDDSSIFITKIITGGAAAQDGRLRVNDCILRVNEVDVRDVTHSKAVEALKEAGSIVRLYVKRRKPVSEKIMEIKLIKGPKGLGFSIAGGVGNQHIPGDNSIYVTKIIEGGAAHKDGKLQIGDKLLAVNNVCLEEVTHEEAVTALKNTSDFVYLKVAKPTSMYMNDGYAPPDITNSSSQPVDNHVSPSSFLGQTPASPARYSPVSKAVLGDDEITREPRKVVLHRGSTGLGFNIVGGEDGEGIFISFILAGGPADLSGELRKGDRIISVNSVDLRAASHEQAAAALKNAGQAVTIVAQYRPEEYSRFEAKIHDLREQMMNSSISSGSGSLRTSQKRSLYVRALFDYDKTKDSGLPSQGLNFKFGDILHVINASDDEWWQARQVTPDGESDEVGVIPSKRRVEKKERARLKTVKFNSKTRDKGEIPDDMGSKGLKHVTSNASDSESSYRGQEEYVLSYEPVNQQEVNYTRPVIILGPMKDRINDDLISEFPDKFGSCVPHTTRPKRDYEVDGRDYHFVTSREQMEKDIQEHKFIEAGQYNNHLYGTSVQSVREVAEKGKHCILDVSGNAIKRLQIAQLYPISIFIKPKSMENIMEMNKRLTEEQARKTFERAMKLEQEFTEHFTAIVQGDTLEDIYNQVKQIIEEQSGSYIWVPAKEKL.

The 61-residue stretch at 4-64 folds into the L27 domain; sequence RKQDTQRALH…FYEVTLLDNP (61 aa). At T115 the chain carries Phosphothreonine. Phosphoserine occurs at positions 122, 138, and 158. The interval 162–212 is interaction with SH3 domains; that stretch reads PTEAVLPSPPTVPVIPVLPVPAENTVILPTIPQANPPPVLVNTDSLETPTY. PDZ domains lie at 224–310, 319–405, and 466–546; these read EITL…VKRR, EIKL…VAKP, and KVVL…AQYR. The segment at 224–546 is required for interaction with MARCHF2; the sequence is EITLERGNSG…QAVTIVAQYR (323 aa). The residue at position 232 (S232) is a Phosphoserine. Position 399 is a phosphotyrosine (Y399). Phosphoserine is present on residues S568, S573, S575, S579, S598, S619, S676, S684, S687, Q709, and S834. Positions 581-651 constitute an SH3 domain; that stretch reads KRSLYVRALF…PSKRRVEKKE (71 aa). The segment at 662–693 is disordered; the sequence is SKTRDKGEIPDDMGSKGLKHVTSNASDSESSY. Polar residues predominate over residues 682 to 693; the sequence is VTSNASDSESSY. A Guanylate kinase-like domain is found at 714–889; the sequence is TRPVIILGPM…IYNQVKQIIE (176 aa).

Belongs to the MAGUK family. In terms of assembly, homotetramer. Interacts (via guanylate kinase-like domain) with DLGAP1, DLGAP2, DLGAP3, DLGAP4 and MAP1A. Interacts (via guanylate kinase-like domain) with KIF13B. May interact with HTR2A. Interacts (via PDZ domains) with GRIA1. Interacts (via PDZ domains) with GRIN2A. Interacts (via PDZ domains) with KCND2 and KCND3. Interacts (via PDZ domains) with KCNA1, KCNA2, KCNA3 and KCNA4. Interacts (via PDZ domains) with ADGRA3. Interacts with KCNF1. Interacts with CAMK2. Interacts with cytoskeleton-associated protein EPB41. Interacts with cytoskeleton-associated protein EZR. Found in a complex with KCNA5 and CAV3. Found in a complex with APC and CTNNB1. Interacts (via PDZ domains) with APC. Interacts with CDH1 through binding to PIK3R1. Forms multiprotein complexes with CASK, LIN7A, LIN7B, LIN7C, APBA1, and KCNJ12. Interacts with TOPK. Forms a tripartite complex composed of DLG1, MPP7 and LIN7 (LIN7A or LIN7C). May interact with TJAP1. Interacts with PTEN. Interacts with FRMPD4 (via C-terminus). Interacts with LRFN1, LRFN2 and LRFN4. Interacts with SFPQ. Interacts (via PDZ domains) with ADGRA2 (via PDZ-binding motif). Interacts with ADAM10; this interaction recruits ADAM10 to the cell membrane during long-term depression in hippocampal neurons. Interacts with DGKI (via PDZ-binding motif). Interacts (via PDZ domains) with MARCHF2 (via PDZ domain); the interaction leads to DLG1 ubiqtuitination and degradation. Interacts (via N-terminus) with MPP3; this interaction connects CADM1 with DLG1 and links CADM1 with the regulatory subunit of phosphoinositide-3-kinase (PI3K) by forming a multiprotein complex and participates in cell spreading. As to quaternary structure, (Microbial infection) Interacts with HTLV-1 protein Tax. (Microbial infection) Interacts (via PDZ domains 1 and 2) with influenza A virus protein NS1; the interaction results in the translocation of DLG1 from the cell membrane to perinuclear puncta. Acts as a scaffold protein to facilitate the interaction between LIN7C and influenza A virus protein NS1; the interaction facilitates translocation of LIN7C to cytoplasmic puncta. In terms of assembly, (Microbial infection) Interacts with human papillomavirus 18/HPV-18 protein E6. Post-translationally, phosphorylated by MAPK12. Phosphorylation of Ser-232 regulates association with GRIN2A. Ubiquitinated; by MARCHF2 which results in its degradation. As to expression, abundantly expressed in atrial myocardium (at protein level). Expressed in lung fibroblasts, cervical epithelial and B-cells (at protein level). Expressed in the brain (at protein level). Widely expressed, with isoforms displaying different expression profiles.

The protein localises to the cell membrane. It localises to the basolateral cell membrane. Its subcellular location is the endoplasmic reticulum membrane. It is found in the postsynaptic density. The protein resides in the synapse. The protein localises to the sarcolemma. It localises to the apical cell membrane. Its subcellular location is the cell junction. It is found in the cytoplasm. Essential multidomain scaffolding protein required for normal development. Recruits channels, receptors and signaling molecules to discrete plasma membrane domains in polarized cells. Promotes epithelial cell layer barrier function via maintaining cell-cell adhesion. May also play a role in adherens junction assembly, signal transduction, cell proliferation, synaptogenesis and lymphocyte activation. Regulates the excitability of cardiac myocytes by modulating the functional expression of Kv4 channels. Functional regulator of Kv1.5 channel. During long-term depression in hippocampal neurons, it recruits ADAM10 to the plasma membrane. The sequence is that of Disks large homolog 1 from Homo sapiens (Human).